We begin with the raw amino-acid sequence, 94 residues long: DNA-directed RNA polymerase subunit Rpo11 (94 aa).

This sequence belongs to the archaeal Rpo11/eukaryotic RPB11/RPC19 RNA polymerase subunit family. In terms of assembly, part of the RNA polymerase complex.

The protein localises to the cytoplasm. It catalyses the reaction RNA(n) + a ribonucleoside 5'-triphosphate = RNA(n+1) + diphosphate. DNA-dependent RNA polymerase (RNAP) catalyzes the transcription of DNA into RNA using the four ribonucleoside triphosphates as substrates. The sequence is that of DNA-directed RNA polymerase subunit Rpo11 from Halobacterium salinarum (strain ATCC 700922 / JCM 11081 / NRC-1) (Halobacterium halobium).